A 196-amino-acid polypeptide reads, in one-letter code: Vascular-related unknown protein 2 (196 aa).

Residues 84 to 130 (ANNINTNPKKRRIIHQHKEEEEEELQKGEEEEEDEEDTASSPSNKTK) are disordered. Residues 103–121 (EEEEELQKGEEEEEDEEDT) are compositionally biased toward acidic residues.

Involved in the regulation of plant growth. The polypeptide is Vascular-related unknown protein 2 (Arabidopsis thaliana (Mouse-ear cress)).